Consider the following 385-residue polypeptide: Probable splicing factor YJU2B (385 aa).

The disordered stretch occupies residues 1–26 (MGERKGQNKYYPPDFNPEKHGSLNRY). The residue at position 40 (Ser40) is a Phosphoserine. Positions 182 to 214 (LNSMLRRHFREKKKAMQEEEEKDQALQAKASLA) form a coiled coil. Residues 257–385 (PSAQGPSASS…VADYSDSESE (129 aa)) are disordered. Residues 258–271 (SAQGPSASSSKASS) are compositionally biased toward low complexity. Ser306 bears the Phosphoserine mark. Polar residues predominate over residues 359–373 (GSSQEDLLNPNTPNA).

It belongs to the CWC16 family.

The protein localises to the nucleus. Functionally, may be involved in mRNA splicing. The polypeptide is Probable splicing factor YJU2B (Yju2b) (Mus musculus (Mouse)).